Consider the following 433-residue polypeptide: 23S rRNA (uracil(1939)-C(5))-methyltransferase RlmD (433 aa).

Residues 10 to 68 (RTTTRQIITVSVNDLDSFGQGVARHNGKTLFIPGLLPQENAEVAVTEDKKQYARAKVVR) enclose the TRAM domain. Positions 81, 87, 90, and 162 each coordinate [4Fe-4S] cluster. Glutamine 265, phenylalanine 294, asparagine 299, glutamate 315, asparagine 342, and aspartate 363 together coordinate S-adenosyl-L-methionine. Catalysis depends on cysteine 389, which acts as the Nucleophile.

It belongs to the class I-like SAM-binding methyltransferase superfamily. RNA M5U methyltransferase family. RlmD subfamily.

It carries out the reaction uridine(1939) in 23S rRNA + S-adenosyl-L-methionine = 5-methyluridine(1939) in 23S rRNA + S-adenosyl-L-homocysteine + H(+). Its function is as follows. Catalyzes the formation of 5-methyl-uridine at position 1939 (m5U1939) in 23S rRNA. The sequence is that of 23S rRNA (uracil(1939)-C(5))-methyltransferase RlmD from Shigella flexneri serotype 5b (strain 8401).